A 192-amino-acid chain; its full sequence is Acetolactate synthase small subunit (192 aa).

The 75-residue stretch at 29 to 103 folds into the ACT domain; sequence IITVKVRNEM…DTLKVSDLTD (75 aa).

This sequence belongs to the acetolactate synthase small subunit family. As to quaternary structure, dimer of large and small chains.

The enzyme catalyses 2 pyruvate + H(+) = (2S)-2-acetolactate + CO2. It participates in amino-acid biosynthesis; L-isoleucine biosynthesis; L-isoleucine from 2-oxobutanoate: step 1/4. The protein operates within amino-acid biosynthesis; L-valine biosynthesis; L-valine from pyruvate: step 1/4. The chain is Acetolactate synthase small subunit (ilvH) from Aquifex aeolicus (strain VF5).